The sequence spans 503 residues: GMP synthase [glutamine-hydrolyzing] (503 aa).

Residues 3–189 (PVLVVDFGSQ…AFLSSFAAPN (187 aa)) enclose the Glutamine amidotransferase type-1 domain. The active-site Nucleophile is the C80. Residues H165 and E167 contribute to the active site. In terms of domain architecture, GMPS ATP-PPase spans 190-380 (WDPEQTICGT…LGIPKHIVHR (191 aa)). An ATP-binding site is contributed by 217–223 (SGGVDSV).

As to quaternary structure, homodimer.

The enzyme catalyses XMP + L-glutamine + ATP + H2O = GMP + L-glutamate + AMP + diphosphate + 2 H(+). The protein operates within purine metabolism; GMP biosynthesis; GMP from XMP (L-Gln route): step 1/1. In terms of biological role, catalyzes the synthesis of GMP from XMP. The protein is GMP synthase [glutamine-hydrolyzing] of Tropheryma whipplei (strain TW08/27) (Whipple's bacillus).